We begin with the raw amino-acid sequence, 516 residues long: GMP synthase [glutamine-hydrolyzing] (516 aa).

One can recognise a Glutamine amidotransferase type-1 domain in the interval 8 to 198 (KILILDFGSQ…VVNICGCDTL (191 aa)). Cysteine 84 acts as the Nucleophile in catalysis. Residues histidine 172 and glutamate 174 contribute to the active site. The GMPS ATP-PPase domain maps to 199–391 (WNIENIIEND…LGLPYNMLYR (193 aa)). 226-232 (SGGVDSS) contacts ATP.

As to quaternary structure, homodimer.

It carries out the reaction XMP + L-glutamine + ATP + H2O = GMP + L-glutamate + AMP + diphosphate + 2 H(+). It functions in the pathway purine metabolism; GMP biosynthesis; GMP from XMP (L-Gln route): step 1/1. In terms of biological role, catalyzes the synthesis of GMP from XMP. In Francisella tularensis subsp. holarctica (strain LVS), this protein is GMP synthase [glutamine-hydrolyzing].